The sequence spans 388 residues: Succinate--CoA ligase [ADP-forming] subunit beta (388 aa).

The region spanning lysine 9 to glutamate 244 is the ATP-grasp domain. ATP is bound by residues lysine 46, glycine 53–glycine 55, glutamate 99, alanine 102, and glutamate 107. Positions 199 and 213 each coordinate Mg(2+). Residues asparagine 264 and glycine 321 to methionine 323 contribute to the substrate site.

This sequence belongs to the succinate/malate CoA ligase beta subunit family. In terms of assembly, heterotetramer of two alpha and two beta subunits. Requires Mg(2+) as cofactor.

It carries out the reaction succinate + ATP + CoA = succinyl-CoA + ADP + phosphate. It catalyses the reaction GTP + succinate + CoA = succinyl-CoA + GDP + phosphate. Its pathway is carbohydrate metabolism; tricarboxylic acid cycle; succinate from succinyl-CoA (ligase route): step 1/1. Succinyl-CoA synthetase functions in the citric acid cycle (TCA), coupling the hydrolysis of succinyl-CoA to the synthesis of either ATP or GTP and thus represents the only step of substrate-level phosphorylation in the TCA. The beta subunit provides nucleotide specificity of the enzyme and binds the substrate succinate, while the binding sites for coenzyme A and phosphate are found in the alpha subunit. The protein is Succinate--CoA ligase [ADP-forming] subunit beta of Ralstonia pickettii (strain 12J).